A 1420-amino-acid chain; its full sequence is DNA-directed RNA polymerase subunit beta' (1420 aa).

Zn(2+) contacts are provided by cysteine 72, cysteine 74, cysteine 87, and cysteine 90. Positions 462, 464, and 466 each coordinate Mg(2+). Zn(2+)-binding residues include cysteine 816, cysteine 896, cysteine 903, and cysteine 906.

This sequence belongs to the RNA polymerase beta' chain family. As to quaternary structure, the RNAP catalytic core consists of 2 alpha, 1 beta, 1 beta' and 1 omega subunit. When a sigma factor is associated with the core the holoenzyme is formed, which can initiate transcription. Mg(2+) is required as a cofactor. The cofactor is Zn(2+).

The enzyme catalyses RNA(n) + a ribonucleoside 5'-triphosphate = RNA(n+1) + diphosphate. Functionally, DNA-dependent RNA polymerase catalyzes the transcription of DNA into RNA using the four ribonucleoside triphosphates as substrates. This Blochmanniella floridana protein is DNA-directed RNA polymerase subunit beta'.